A 208-amino-acid polypeptide reads, in one-letter code: Thymidylate kinase (208 aa).

10-17 (GLEGAGKS) contacts ATP.

Belongs to the thymidylate kinase family.

It catalyses the reaction dTMP + ATP = dTDP + ADP. Its function is as follows. Phosphorylation of dTMP to form dTDP in both de novo and salvage pathways of dTTP synthesis. The protein is Thymidylate kinase of Glaesserella parasuis serovar 5 (strain SH0165) (Haemophilus parasuis).